We begin with the raw amino-acid sequence, 113 residues long: Iron-sulfur cluster insertion protein ErpA (113 aa).

Iron-sulfur cluster-binding residues include Cys-41, Cys-105, and Cys-107.

The protein belongs to the HesB/IscA family. In terms of assembly, homodimer. Iron-sulfur cluster is required as a cofactor.

Functionally, required for insertion of 4Fe-4S clusters for at least IspG. In Aliivibrio salmonicida (strain LFI1238) (Vibrio salmonicida (strain LFI1238)), this protein is Iron-sulfur cluster insertion protein ErpA.